Consider the following 299-residue polypeptide: Virginiamycin B lyase (299 aa).

Residue His229 coordinates substrate. Glu269 is a Mg(2+) binding site. The active-site Proton acceptor is the His271. Glu286 contacts Mg(2+).

The protein belongs to the Vgb family. In terms of assembly, monomer. It depends on Mg(2+) as a cofactor.

In terms of biological role, inactivates the type B streptogramin antibiotics by linearizing the lactone ring at the ester linkage, generating a free phenylglycine carboxylate and converting the threonyl moiety into 2-amino-butenoic acid. The sequence is that of Virginiamycin B lyase from Bordetella parapertussis (strain 12822 / ATCC BAA-587 / NCTC 13253).